The primary structure comprises 263 residues: MARGPKKHLKRVAAPKHWMLDKLTGVFAPRPSTGPHKLRECLPLIIFLRNRLKYALTGDEVKKICMQRFIKIDGKVRTDITYPAGFMDVISIEKTGEHFRLVYDTKGRFAVHRITAEEAKYKLCKVRKIFVATKGIPHLVTHDARTIRYPDPLIKVNDTVQINLETGKITDFIKFDTGNLCMVTGGANLGRIGVITNREKHPGSFDVVHVKDANGNSFATRLSNIFVIGKGNKPWISLPRGKGIRLTIAEERDKRLAAKQSSG.

The S4 RNA-binding domain occupies 42–104 (LPLIIFLRNR…TGEHFRLVYD (63 aa)).

It belongs to the eukaryotic ribosomal protein eS4 family.

The chain is Small ribosomal subunit protein eS4, Y isoform 1 (RPS4Y1) from Monodelphis domestica (Gray short-tailed opossum).